The following is a 113-amino-acid chain: Hydrogenase maturation factor HypA (113 aa).

Position 2 (H2) interacts with Ni(2+). Zn(2+) is bound by residues C73, C76, C89, and C92.

This sequence belongs to the HypA/HybF family.

In terms of biological role, involved in the maturation of [NiFe] hydrogenases. Required for nickel insertion into the metal center of the hydrogenase. The sequence is that of Hydrogenase maturation factor HypA from Actinobacillus succinogenes (strain ATCC 55618 / DSM 22257 / CCUG 43843 / 130Z).